The sequence spans 286 residues: MTFSERFSAYARLTRLDKPIGILLLLWPTLWGLWLAADGMPDPMILVIFVLGTILMRSAGCAINDFADRKIDPHVSRTRNRPLATGIISSREALLVAAGLSLCAFLLILPLNLLTILLSVPALLLAISYPFTKRFFAMPQAYLGIAFSFGIPMAFAAQTGTVPPLAWLLVLANLFWVIAYDTEYALVDLADDLKIGIKTSAITFGRFDVAGILLCHITFLSILTYAGILLQRGIWFYGALLVALGLVIVQYTMIRNREPARCFQAFLHNNRVGAVIFAGILLDTLI.

Transmembrane regions (helical) follow at residues 20 to 40, 43 to 63, 83 to 103, 135 to 155, 160 to 180, 209 to 229, and 234 to 254; these read IGIL…ADGM, PMIL…GCAI, LATG…LSLC, FFAM…PMAF, GTVP…VIAY, VAGI…AGIL, and IWFY…YTMI.

It belongs to the UbiA prenyltransferase family. The cofactor is Mg(2+).

It is found in the cell inner membrane. It carries out the reaction all-trans-octaprenyl diphosphate + 4-hydroxybenzoate = 4-hydroxy-3-(all-trans-octaprenyl)benzoate + diphosphate. It participates in cofactor biosynthesis; ubiquinone biosynthesis. Its function is as follows. Catalyzes the prenylation of para-hydroxybenzoate (PHB) with an all-trans polyprenyl group. Mediates the second step in the final reaction sequence of ubiquinone-8 (UQ-8) biosynthesis, which is the condensation of the polyisoprenoid side chain with PHB, generating the first membrane-bound Q intermediate 3-octaprenyl-4-hydroxybenzoate. This chain is 4-hydroxybenzoate octaprenyltransferase, found in Nitrosomonas eutropha (strain DSM 101675 / C91 / Nm57).